The following is a 491-amino-acid chain: Probable cytosol aminopeptidase (491 aa).

2 residues coordinate Mn(2+): Lys-261 and Asp-266. Residue Lys-273 is part of the active site. Mn(2+)-binding residues include Asp-284, Asp-343, and Glu-345. Arg-347 is a catalytic residue.

This sequence belongs to the peptidase M17 family. Mn(2+) serves as cofactor.

The protein localises to the cytoplasm. The catalysed reaction is Release of an N-terminal amino acid, Xaa-|-Yaa-, in which Xaa is preferably Leu, but may be other amino acids including Pro although not Arg or Lys, and Yaa may be Pro. Amino acid amides and methyl esters are also readily hydrolyzed, but rates on arylamides are exceedingly low.. It carries out the reaction Release of an N-terminal amino acid, preferentially leucine, but not glutamic or aspartic acids.. Presumably involved in the processing and regular turnover of intracellular proteins. Catalyzes the removal of unsubstituted N-terminal amino acids from various peptides. In Stenotrophomonas maltophilia (strain K279a), this protein is Probable cytosol aminopeptidase.